The chain runs to 212 residues: Proheparin-binding EGF-like growth factor (212 aa).

A signal peptide spans methionine 1–alanine 18. Residues alanine 19–leucine 167 are Extracellular-facing. The interval serine 82–lysine 108 is disordered. A compositionally biased stretch (basic residues) spans proline 90–glycine 106. The region spanning lysine 108–histidine 148 is the EGF-like domain. Intrachain disulfides connect cysteine 112–cysteine 125, cysteine 120–cysteine 136, and cysteine 138–cysteine 147. The propeptide at proline 153–histidine 212 is C-terminal. Residues alanine 168–phenylalanine 188 form a helical membrane-spanning segment. At arginine 189–histidine 212 the chain is on the cytoplasmic side.

Interacts with CNIH2.

Its subcellular location is the secreted. It localises to the extracellular space. The protein localises to the cell membrane. Functionally, may be involved in macrophage-mediated cellular proliferation. It is mitogenic for fibroblasts and smooth muscle but not endothelial cells. It is able to bind EGF receptor/EGFR with higher affinity than EGF itself and is a far more potent mitogen for smooth muscle cells than EGF. Plays an important role in the proper development of cranial nerves by inhibiting the migration of the cranial neural crest cells (NCCs) into the odd-numbered neuromeres (r3 and r5) of the hindbrain Plays a role in mediating v-Jun-induced oncogenic transformation. This Gallus gallus (Chicken) protein is Proheparin-binding EGF-like growth factor (HBEGF).